A 387-amino-acid polypeptide reads, in one-letter code: MLAQEVQQVLAAGTDDASACQISNMTAYEMEKGRKIVGLTKGATESFVVPRLSPLNSTGGEQWAFDGVSEDGVKSFMFGFYRDPNYSILGAGNFRLSLEFGFANRERVAELYYAERTVIETCPQGVRGVWYSESEGWHHSFLIKADMSEAVITLNSDSLKGTITYKSKSLPIAADGHVWPNGNATTEPVRYLHWSEPIPAGTVEFDVEIKGKKATWKGIGGHERFWTAFSWFTCLTNLQGLRAMAGPYVLSFFRFESGLDEGHVHQSAVLFKDGVQIFRSTLGAESDTEDYVLAQKTYGGAVTGDLKDKVTGFQVELVSPSKKQHYTFFIEHKNLAFEYLLGEGVGGSGFSAIAKGGHVGQLQYEGPSLTEALTFPKNSPLFKSNYV.

The protein belongs to the Diels-Alderase family.

It functions in the pathway secondary metabolite biosynthesis. Its function is as follows. Diels-Alderase; part of the gene cluster that mediates the biosynthesis of a tyrosine-derived cytochalasan acting as a fungal signal recognized by resistant rice plants and leads to avirulence in Pi33 resistant rice cultivars. The first step in the pathway is catalyzed by the hybrid PKS-NRPS ACE1, assisted by the enoyl reductase RAP1, that are responsible for fusion of the tyrosine precursor and the polyketide backbone. The polyketide synthase module (PKS) of ACE1 is responsible for the synthesis of the polyketide backbone and the downstream nonribosomal peptide synthetase (NRPS) amidates the carboxyl end of the polyketide with the tyrosine precursor. Because ACE1 lacks a designated enoylreductase (ER) domain, the required activity is provided the enoyl reductase RAP1. Reduction by the hydrolyase ORFZ, followed by dehydration and intra-molecular Diels-Alder cyclization by the Diels-Alderase ORF3 then yield the required isoindolone-fused macrocycle. A number of oxidative steps catalyzed by the tailoring enzymes identified within the cluster, including cytochrome P450 monooxygenases CYP1 to CYP4, the FAD-linked oxidoreductase OXR2 and the short-chain dehydrogenase/reductase OXR1, are further required to afford the final cytochalasans that confer avirulence and which have still to be identified. The monooxygenase CYP1 has been shown to be a site-selective C-18 hydroxylase whereas the function of CYP3 is the site-selective epoxidation of the C-6/C-7 olefin that is present in some intermediate compounds. Finally, SYN2 and RAP2 are not required for avirulence in Pi33 resistant rice cultivars. This is Diels-Alderase ORF3 from Pyricularia oryzae (strain 70-15 / ATCC MYA-4617 / FGSC 8958) (Rice blast fungus).